We begin with the raw amino-acid sequence, 147 residues long: uncharacterized protein (147 aa).

Residues 63-79 (LFIVACSAVFATIAYIN) traverse the membrane as a helical segment.

This sequence belongs to the FUN14 family.

It localises to the membrane. This is an uncharacterized protein from Schizosaccharomyces pombe (strain 972 / ATCC 24843) (Fission yeast).